Reading from the N-terminus, the 117-residue chain is Putative membrane protein insertion efficiency factor (117 aa).

The tract at residues 87–117 is disordered; that stretch reads RKGGPSAAEPAIEGHIPSSPAAETPSHVQGA.

The protein belongs to the UPF0161 family.

The protein resides in the cell membrane. Functionally, could be involved in insertion of integral membrane proteins into the membrane. In Streptomyces avermitilis (strain ATCC 31267 / DSM 46492 / JCM 5070 / NBRC 14893 / NCIMB 12804 / NRRL 8165 / MA-4680), this protein is Putative membrane protein insertion efficiency factor.